The sequence spans 508 residues: MSILTTTALASILDWLAANAPKAELASDSRRIAQGDVFVAYPGDEADGRSYIANAIERGAQAVIYEAAGCTWDAEWDVAHLAIDDLKEHAGEIAAAYYAHPDRSMFTVAITGTNGKTSCAQWLGSALSRLGQPTAVIGTLGVGIFTNGGHGSFDVTGYTTPDAVLLQRSLVNVSNLGATALAIEASSIGLHQGRLSGMHFDMALFTNFTRDHLDYHGDMAAYEEAKAMLFDWPGLQHAVINLDDAMGVRLVQRLQSRQADVGITGYTLSDKKIDGIAVLRATDIRSNQSGTVFQLESSAGNTQVKTQLVGQFNVSNVLGIIGILLAKGIALQDAVNAVEALTAVPGRMQQLGGGEAPLVVIDYAHTPDALEKTLATLRSVANDRGGELWCVFGCGGDRDPGKRPQMGKVSMAADHIVVTTDNPRNEEPANIIGDIVAGITAPKNAPQIIEDRASAILWAGRHAARQDVILLAGKGHEAYQEVKGRKLPFLDADHAALALSTRVMQGAS.

Serine 29 is a binding site for UDP-N-acetyl-alpha-D-muramoyl-L-alanyl-D-glutamate. Residue glycine 112–serine 118 coordinates ATP. Residues threonine 159–threonine 160, serine 186, glutamine 192, and arginine 194 contribute to the UDP-N-acetyl-alpha-D-muramoyl-L-alanyl-D-glutamate site. Lysine 226 bears the N6-carboxylysine mark. Residues arginine 398, aspartate 421–arginine 424, glycine 473, and glutamate 477 contribute to the meso-2,6-diaminopimelate site. Positions aspartate 421–arginine 424 match the Meso-diaminopimelate recognition motif motif.

This sequence belongs to the MurCDEF family. MurE subfamily. It depends on Mg(2+) as a cofactor. In terms of processing, carboxylation is probably crucial for Mg(2+) binding and, consequently, for the gamma-phosphate positioning of ATP.

It is found in the cytoplasm. The catalysed reaction is UDP-N-acetyl-alpha-D-muramoyl-L-alanyl-D-glutamate + meso-2,6-diaminopimelate + ATP = UDP-N-acetyl-alpha-D-muramoyl-L-alanyl-gamma-D-glutamyl-meso-2,6-diaminopimelate + ADP + phosphate + H(+). It functions in the pathway cell wall biogenesis; peptidoglycan biosynthesis. In terms of biological role, catalyzes the addition of meso-diaminopimelic acid to the nucleotide precursor UDP-N-acetylmuramoyl-L-alanyl-D-glutamate (UMAG) in the biosynthesis of bacterial cell-wall peptidoglycan. The sequence is that of UDP-N-acetylmuramoyl-L-alanyl-D-glutamate--2,6-diaminopimelate ligase from Janthinobacterium sp. (strain Marseille) (Minibacterium massiliensis).